Here is a 399-residue protein sequence, read N- to C-terminus: Glutathione S-transferase LANCL1 (399 aa).

Ala2 carries the N-acetylalanine modification. N6-acetyllysine is present on Lys142. Cys276 lines the Zn(2+) pocket. Residue Lys317 coordinates glutathione. Zn(2+) is bound by residues Cys322 and His323. Residue 364-367 (RTPD) participates in glutathione binding.

This sequence belongs to the LanC-like protein family. As to quaternary structure, interacts with the C-terminal of STOM. Interacts with the EPS8 SH3 domain. Interaction with EPS8 is inhibited by glutathione binding. In terms of tissue distribution, strongly expressed in the brain, testis and skeletal muscle. Expressed in the neurons of the cerebellum, the germinal cells of the seminiferous tubules in testis, in liver hepoatocytes and in cardiac myocytes.

It is found in the cytoplasm. The protein localises to the cell membrane. The enzyme catalyses RX + glutathione = an S-substituted glutathione + a halide anion + H(+). The catalysed reaction is 1-chloro-2,4-dinitrobenzene + glutathione = 2,4-dinitrophenyl-S-glutathione + chloride + H(+). Functionally, functions as a glutathione transferase. Catalyzes conjugation of the glutathione (GSH) to artificial substrates 1-chloro-2,4-dinitrobenzene (CDNB) and p-nitrophenyl acetate. Mitigates neuronal oxidative stress during normal postnatal development and in response to oxidative stresses probably through GSH antioxidant defense mechanism. May play a role in EPS8 signaling. Binds glutathione. This is Glutathione S-transferase LANCL1 from Rattus norvegicus (Rat).